The sequence spans 229 residues: tRNA pseudouridine synthase B (229 aa).

Residue aspartate 52 is the Nucleophile of the active site.

It belongs to the pseudouridine synthase TruB family. Type 1 subfamily.

The enzyme catalyses uridine(55) in tRNA = pseudouridine(55) in tRNA. Functionally, responsible for synthesis of pseudouridine from uracil-55 in the psi GC loop of transfer RNAs. This chain is tRNA pseudouridine synthase B, found in Flavobacterium johnsoniae (strain ATCC 17061 / DSM 2064 / JCM 8514 / BCRC 14874 / CCUG 350202 / NBRC 14942 / NCIMB 11054 / UW101) (Cytophaga johnsonae).